Consider the following 773-residue polypeptide: Histone-lysine N-methyltransferase mes-2 (773 aa).

Residues 1–13 (MSNSEPSTSTPSG) show a composition bias toward polar residues. A disordered region spans residues 1–33 (MSNSEPSTSTPSGKTKKRGKKCETSMGKSKKSK). Residues 1–194 (MSNSEPSTST…TPDQLRLTHM (194 aa)) are interaction with mes-6. Residues 505 to 614 (IREDDMRDSQ…SNIIKCRNFG (110 aa)) enclose the CXC domain. Positions 616 to 737 (TRMIQKRTYC…ISEELTFDYS (122 aa)) constitute an SET domain. Residues 749–773 (VQTKERSEKPSRPKSQKLSKPMTSE) form a disordered region. Residues 750–759 (QTKERSEKPS) show a composition bias toward basic and acidic residues.

The protein belongs to the class V-like SAM-binding methyltransferase superfamily. Histone-lysine methyltransferase family. EZ subfamily. In terms of assembly, interacts directly with mes-6 via its N-terminal domain. Forms a heterotrimeric complex with mes-3 and mes-6. Does not interact with mes-4. As to expression, in adults, it is predominantly expressed in the germline, and weakly expressed in intestinal cells. Expressed in the hypoderm.

Its subcellular location is the nucleus. The catalysed reaction is L-lysyl(27)-[histone H3] + 3 S-adenosyl-L-methionine = N(6),N(6),N(6)-trimethyl-L-lysyl(27)-[histone H3] + 3 S-adenosyl-L-homocysteine + 3 H(+). Its function is as follows. Polycomb group (PcG) protein. Catalytic subunit of a the mes-2/mes-3/mes-6 complex, which methylates 'Lys-27' of histone H3, leading to transcriptional repression of the affected target genes. PcG proteins act by forming multiprotein complexes, which are required to maintain the transcriptionally repressive state of homeotic genes throughout development. In association with the nfya-1-NF-Y complex, may play a role in repressing the expression of the homeobox protein egl-5 in tissues such as the head. PcG proteins are not required to initiate repression, but to maintain it during later stages of development. The mes-2/mes-3/mes-6 complex may participate in the global inactivation of the X chromosomes in germline cells. This complex is required to exclude mes-4 from the inactivated X-chromosomes in germline cells. Required for small-RNA-induced H3K27 trimethylation. Involved in the negative regulation of lifespan in a germline-independent fashion. This Caenorhabditis elegans protein is Histone-lysine N-methyltransferase mes-2.